The chain runs to 85 residues: UPF0335 protein WP0746 (85 aa).

This sequence belongs to the UPF0335 family.

In Wolbachia pipientis subsp. Culex pipiens (strain wPip), this protein is UPF0335 protein WP0746.